Reading from the N-terminus, the 514-residue chain is Beta-galactoside alpha-2,6-sialyltransferase 2 (514 aa).

The Cytoplasmic portion of the chain corresponds to 1–10; sequence MKSSLKQWRR. Residues 11-31 form a helical; Signal-anchor for type II membrane protein membrane-spanning segment; it reads LALGLILVWALLFLALLSYFM. The Lumenal portion of the chain corresponds to 32–514; the sequence is ESRVDDPHAA…PGFNKVHCEP (483 aa). A compositionally biased stretch (low complexity) spans 70–92; that stretch reads ATSSAPSTSSNTQQEQSQEENPS. Positions 70–183 are disordered; that stretch reads ATSSAPSTSS…TKRVARHGSS (114 aa). Positions 119-132 are enriched in polar residues; sequence FGTQDVGSRSTGVS. Residues 145–166 show a composition bias toward acidic residues; it reads PQEDEDEEEEVIGGEEEDEEGG. Intrachain disulfides connect C246-C512, C289-C441, and C459-C470. N-linked (GlcNAc...) asparagine glycans are attached at residues N330, N350, and N357.

The protein belongs to the glycosyltransferase 29 family.

It localises to the golgi apparatus. The protein resides in the golgi stack membrane. The enzyme catalyses a beta-D-galactoside + CMP-N-acetyl-beta-neuraminate = an N-acetyl-alpha-neuraminyl-(2-&gt;6)-beta-D-galactosyl derivative + CMP + H(+). Its function is as follows. Transfers sialic acid from the donor of substrate CMP-sialic acid to galactose containing acceptor substrates. This is Beta-galactoside alpha-2,6-sialyltransferase 2 (st6gal2) from Danio rerio (Zebrafish).